We begin with the raw amino-acid sequence, 409 residues long: Elongation factor Tu, plastid (409 aa).

The tr-type G domain maps to 10 to 214 (KPHINIGTIG…SVDSYIPTPV (205 aa)). Residues 19-26 (GHVDHGKT) are G1. A GTP-binding site is contributed by 19–26 (GHVDHGKT). Residue T26 coordinates Mg(2+). Positions 60–64 (GITIN) are G2. A G3 region spans residues 81–84 (DCPG). Residues 81–85 (DCPGH) and 136–139 (NKED) each bind GTP. Residues 136-139 (NKED) form a G4 region. The tract at residues 174 to 176 (SAL) is G5.

This sequence belongs to the TRAFAC class translation factor GTPase superfamily. Classic translation factor GTPase family. EF-Tu/EF-1A subfamily.

Its subcellular location is the plastid. It catalyses the reaction GTP + H2O = GDP + phosphate + H(+). Its function is as follows. GTP hydrolase that promotes the GTP-dependent binding of aminoacyl-tRNA to the A-site of ribosomes during protein biosynthesis. This is Elongation factor Tu, plastid (tufA) from Helicosporidium sp. subsp. Simulium jonesii (Green alga).